Reading from the N-terminus, the 217-residue chain is ATP phosphoribosyltransferase (217 aa).

This sequence belongs to the ATP phosphoribosyltransferase family. Short subfamily. Heteromultimer composed of HisG and HisZ subunits.

It localises to the cytoplasm. The catalysed reaction is 1-(5-phospho-beta-D-ribosyl)-ATP + diphosphate = 5-phospho-alpha-D-ribose 1-diphosphate + ATP. Its pathway is amino-acid biosynthesis; L-histidine biosynthesis; L-histidine from 5-phospho-alpha-D-ribose 1-diphosphate: step 1/9. In terms of biological role, catalyzes the condensation of ATP and 5-phosphoribose 1-diphosphate to form N'-(5'-phosphoribosyl)-ATP (PR-ATP). Has a crucial role in the pathway because the rate of histidine biosynthesis seems to be controlled primarily by regulation of HisG enzymatic activity. The protein is ATP phosphoribosyltransferase of Prochlorococcus marinus (strain MIT 9313).